The chain runs to 316 residues: MDTIKIFNHGEFDTIRNKLVNLLKVVKWNTINSNVTVSSTDTIDISNCIREILYKQFKNVRNIEVSSNISFIKYNRFNDTTLTDDNVGYYLVIYLNRMKSVKTLIYPTPETVITSSEDIMFSKSLNFRFENVKRDYKLVMCSISLTYKPSICRIQYDNNKYIDISDSQEGNNLCYCVITMDPHHLIDLETICVLVNKSGKCLLVNEFYTRFRKNHIYDSFADLCMDHIFELPDTEELFTLRNDDGRNIAWDNDKLESGNNTWIPKTDDEYKFLSKLMNIAKFNNTKFDYYMLVGDTDPCTVFTFKVTKYYINLNYE.

Belongs to the poxviridae OPG031 protein family.

The protein localises to the host cytoplasm. Its subcellular location is the host nucleus. In terms of biological role, plays a role in the inhibition of host NF-kappa-B activation. Mechanistically, blocks the subunit p65/RELA translocation into the host nucleus. The chain is Protein C4 (OPG031) from Homo sapiens (Human).